The primary structure comprises 335 residues: NAC domain-containing protein 87 (335 aa).

Residues 21 to 172 (LPPGFRFHPT…EWVVCRVFHK (152 aa)) form the NAC domain. A DNA-binding region spans residues 119-178 (VGMKKTLVFYRGRAPKGEKTNWVMHEYRLEGKYSYYNLPKSARDEWVVCRVFHKNNPSTT).

The protein localises to the nucleus. In terms of biological role, binds to the promoter regions of genes involved in chlorophyll catabolic processes, such as NYC1, SGR1, SGR2 and PAO. This is NAC domain-containing protein 87 from Arabidopsis thaliana (Mouse-ear cress).